We begin with the raw amino-acid sequence, 326 residues long: Protein SEH1 (326 aa).

WD repeat units follow at residues 7–46 (TLDS…SSTF), 54–95 (VSES…AHGL), 105–146 (NKSS…ELKN), 224–266 (DKGD…DLEG), and 278–317 (GHQG…EWHE).

Belongs to the WD repeat SEC13 family. Part of the nuclear pore complex (NPC). The NPC has an eight-fold symmetrical structure comprising a central transport channel and two rings, the cytoplasmic and nuclear rings, to which eight filaments are attached. The cytoplasmic filaments have loose ends, while the nuclear filaments are joined in a distal ring, forming a nuclear basket. NPCs are highly dynamic in configuration and composition, and can be devided in 3 subcomplexes, the NUP62 subcomplex, the NUP107-160 subcomplex and the NUP93 subcomplex, containing approximately 30 different nucleoporin proteins.

It localises to the nucleus envelope. The protein resides in the nucleus. It is found in the cytoplasm. The protein localises to the nuclear pore complex. Its function is as follows. Required for proper export of mRNAs from the nucleus to the cytoplasm. The chain is Protein SEH1 from Arabidopsis thaliana (Mouse-ear cress).